Consider the following 156-residue polypeptide: SsrA-binding protein (156 aa).

The protein belongs to the SmpB family.

The protein localises to the cytoplasm. Required for rescue of stalled ribosomes mediated by trans-translation. Binds to transfer-messenger RNA (tmRNA), required for stable association of tmRNA with ribosomes. tmRNA and SmpB together mimic tRNA shape, replacing the anticodon stem-loop with SmpB. tmRNA is encoded by the ssrA gene; the 2 termini fold to resemble tRNA(Ala) and it encodes a 'tag peptide', a short internal open reading frame. During trans-translation Ala-aminoacylated tmRNA acts like a tRNA, entering the A-site of stalled ribosomes, displacing the stalled mRNA. The ribosome then switches to translate the ORF on the tmRNA; the nascent peptide is terminated with the 'tag peptide' encoded by the tmRNA and targeted for degradation. The ribosome is freed to recommence translation, which seems to be the essential function of trans-translation. This Paracoccus denitrificans (strain Pd 1222) protein is SsrA-binding protein.